Here is a 422-residue protein sequence, read N- to C-terminus: Serine--tRNA ligase (422 aa).

231–233 (TSE) lines the L-serine pocket. An ATP-binding site is contributed by 262–264 (RQE). Glu285 contacts L-serine. 349 to 352 (EISS) contacts ATP. Residue Ser384 coordinates L-serine.

It belongs to the class-II aminoacyl-tRNA synthetase family. Type-1 seryl-tRNA synthetase subfamily. Homodimer. The tRNA molecule binds across the dimer.

The protein resides in the cytoplasm. The catalysed reaction is tRNA(Ser) + L-serine + ATP = L-seryl-tRNA(Ser) + AMP + diphosphate + H(+). It catalyses the reaction tRNA(Sec) + L-serine + ATP = L-seryl-tRNA(Sec) + AMP + diphosphate + H(+). The protein operates within aminoacyl-tRNA biosynthesis; selenocysteinyl-tRNA(Sec) biosynthesis; L-seryl-tRNA(Sec) from L-serine and tRNA(Sec): step 1/1. Functionally, catalyzes the attachment of serine to tRNA(Ser). Is also able to aminoacylate tRNA(Sec) with serine, to form the misacylated tRNA L-seryl-tRNA(Sec), which will be further converted into selenocysteinyl-tRNA(Sec). The chain is Serine--tRNA ligase from Mycoplasma mycoides subsp. mycoides SC (strain CCUG 32753 / NCTC 10114 / PG1).